The primary structure comprises 349 residues: MSDLNYLYGAPLSKADFKTTAEDFMVDEDLGIEFTGSGEHVCLQVVKKGENTQYVAKLIAQRAGVSPRDVSYAGMKDRHGVCSQWFSVKVPIKKPIDFSDLNSESVFVVSQQRHERKLRTGCHKGNKFTITLRNVTDPLDILCRINAVRSGVPNYFGEQRFGRDGHNLVMAEKMFAGERIRDKKLRGIIISAARSHVFNQLVSLRVKEHGLAKTMHREVFMLSGSNAFFEDAISDENIARLASGDIMMSAPMVGKSEKGLTEQEKVWLGPYQSWCDGLGELGLKNERRMLRLIPQDFSVETIDESTLKLSFGLPKGCFATALLRELVDYTDASPRERKEKDSKDEDPIK.

The active-site Nucleophile is D77. Positions G151–L309 constitute a TRUD domain.

This sequence belongs to the pseudouridine synthase TruD family.

The enzyme catalyses uridine(13) in tRNA = pseudouridine(13) in tRNA. Its function is as follows. Responsible for synthesis of pseudouridine from uracil-13 in transfer RNAs. This is tRNA pseudouridine synthase D from Pseudoalteromonas translucida (strain TAC 125).